The primary structure comprises 355 residues: NAD-dependent protein deacylase sirtuin-6 (355 aa).

The residue at position 2 (Ser-2) is an N-acetylserine. Phosphoserine is present on Ser-10. One can recognise a Deacetylase sirtuin-type domain in the interval 27-272 (PEELERKVWE…TQLMKHLGLE (246 aa)). Lys-33 is modified (N6-acetyllysine). Ala-53, Thr-57, Phe-64, Arg-65, Trp-71, Gln-113, and His-133 together coordinate NAD(+). His-133 functions as the Proton acceptor in the catalytic mechanism. Zn(2+)-binding residues include Cys-141, Cys-144, and Cys-166. Residue Lys-170 forms a Glycyl lysine isopeptide (Lys-Gly) (interchain with G-Cter in ubiquitin) linkage. Cys-177 is a binding site for Zn(2+). NAD(+)-binding residues include Gly-214, Ser-216, Asn-240, Gln-242, and Val-258. The interval 284-355 (KALPPLPRPP…KRVKAEVTPS (72 aa)) is disordered. Pro residues predominate over residues 287 to 296 (PPLPRPPTPK). At Thr-294 the chain carries Phosphothreonine. 2 positions are modified to phosphoserine: Ser-303 and Ser-330.

It belongs to the sirtuin family. Class IV subfamily. In terms of assembly, homodimer; binds to nucleosomes and DNA ends as a homodimer. Interacts with RELA; interferes with RELA binding to target DNA. Interacts with SMARCA5; promoting recruitment of SMARCA5/SNF2H to double-strand breaks (DSBs) sites. Interacts with the mTORC2 complex; preventing the ability of SIRT6 to deacetylate FOXO1. Interacts with the CLOCK-BMAL1 complex; recruited by the CLOCK-BMAL1 complex to regulate expression of clock-controlled genes. Interacts with CSNK2A2; preventing CSNK2A2 localization to the nucleus. In terms of processing, acetylated at Lys-33. Deacetylation at Lys-33 by SIRT1 promotes homomultimerization and binding to double-strand breaks (DSBs) sites. Phosphorylation at Ser-10 by MAPK8/JNK1 in response to oxidative stress stimulates the mono-ADP-ribosyltransferase activity on PARP1, leading to PARP1 recruitment to double-strand breaks (DSBs). Post-translationally, monoubiquitinated at Lys-170 by STUB1/CHIP, preventing its degradation by the proteasome. In terms of processing, sumoylated, leading to specifically decrease ability to deacetylate histone H3 at 'Lys-56' (H3K56ac).

Its subcellular location is the nucleus. The protein localises to the chromosome. The protein resides in the telomere. It localises to the endoplasmic reticulum. It carries out the reaction N(6)-acetyl-L-lysyl-[protein] + NAD(+) + H2O = 2''-O-acetyl-ADP-D-ribose + nicotinamide + L-lysyl-[protein]. It catalyses the reaction N(6)-tetradecanoyl-L-lysyl-[protein] + NAD(+) + H2O = 2''-O-tetradecanoyl-ADP-D-ribose + nicotinamide + L-lysyl-[protein]. The enzyme catalyses N(6)-hexadecanoyl-L-lysyl-[protein] + NAD(+) + H2O = 2''-O-hexadecanoyl-ADP-D-ribose + nicotinamide + L-lysyl-[protein]. The catalysed reaction is L-lysyl-[protein] + NAD(+) = N(6)-(ADP-D-ribosyl)-L-lysyl-[protein] + nicotinamide + H(+). It carries out the reaction L-arginyl-[protein] + NAD(+) = N(omega)-(ADP-D-ribosyl)-L-arginyl-[protein] + nicotinamide + H(+). Its activity is regulated as follows. Compared to the defatty-acylase activity, the protein deacetylase activity is weak in vitro, and requires activation. The histone deacetylase activity is strongly activated upon binding to nucleosomes and chromatin in vivo. Two molecules of SIRT6 associate with the acidic patch of one nucleosome, while the C-terminal disordered region of SIRT6 associates with nucleosomal DNA, leading to efficient histone deacetylation. The protein-lysine deacetylase activity is also activated by long-chain free fatty-acids. Functionally, NAD-dependent protein deacetylase, deacylase and mono-ADP-ribosyltransferase that plays an essential role in DNA damage repair, telomere maintenance, metabolic homeostasis, inflammation, tumorigenesis and aging. Displays protein-lysine deacetylase or defatty-acylase (demyristoylase and depalmitoylase) activity, depending on the context. Acts as a key histone deacetylase by catalyzing deacetylation of histone H3 at 'Lys-9', 'Lys-18' and 'Lys-56' (H3K9ac, H3K18ac and H3K56ac, respectively), suppressing target gene expression of several transcription factors, including NF-kappa-B. Acts as an inhibitor of transcription elongation by mediating deacetylation of H3K9ac and H3K56ac, preventing release of NELFE from chromatin and causing transcriptional pausing. Involved in DNA repair by promoting double-strand break (DSB) repair: acts as a DSB sensor by recognizing and binding DSB sites, leading to (1) recruitment of DNA repair proteins, such as SMARCA5/SNF2H, and (2) deacetylation of histone H3K9ac and H3K56ac. SIRT6 participation to DSB repair is probably involved in extension of life span. Also promotes DNA repair by deacetylating non-histone proteins, such as DDB2 and p53/TP53. Specifically deacetylates H3K18ac at pericentric heterochromatin, thereby maintaining pericentric heterochromatin silencing at centromeres and protecting against genomic instability and cellular senescence. Involved in telomere maintenance by catalyzing deacetylation of histone H3 in telomeric chromatin, regulating telomere position effect and telomere movement in response to DNA damage. Required for embryonic stem cell differentiation by mediating histone deacetylation of H3K9ac. Plays a major role in metabolism by regulating processes such as glycolysis, gluconeogenesis, insulin secretion and lipid metabolism. Inhibits glycolysis via histone deacetylase activity and by acting as a corepressor of the transcription factor HIF1A, thereby controlling the expression of multiple glycolytic genes. Has tumor suppressor activity by repressing glycolysis, thereby inhibiting the Warburg effect. Also regulates glycolysis and tumorigenesis by mediating deacetylation and nuclear export of non-histone proteins, such as isoform M2 of PKM (PKM2). Acts as a negative regulator of gluconeogenesis by mediating deacetylation of non-histone proteins, such as FOXO1 and KAT2A/GCN5. Promotes beta-oxidation of fatty acids during fasting by catalyzing deacetylation of NCOA2, inducing coactivation of PPARA. Acts as a regulator of lipid catabolism in brown adipocytes, both by catalyzing deacetylation of histones and non-histone proteins, such as FOXO1. Also acts as a regulator of circadian rhythms, both by regulating expression of clock-controlled genes involved in lipid and carbohydrate metabolism, and by catalyzing deacetylation of PER2. The defatty-acylase activity is specifically involved in regulation of protein secretion. Has high activity toward long-chain fatty acyl groups and mediates protein-lysine demyristoylation and depalmitoylation of target proteins, such as RRAS2 and TNF, thereby regulating their secretion. Also acts as a mono-ADP-ribosyltransferase by mediating mono-ADP-ribosylation of PARP1, TRIM28/KAP1 or SMARCC2/BAF170. Mono-ADP-ribosyltransferase activity is involved in DNA repair, cellular senescence, repression of LINE-1 retrotransposon elements and regulation of transcription. The chain is NAD-dependent protein deacylase sirtuin-6 from Castor canadensis (American beaver).